Consider the following 245-residue polypeptide: Bis(5'-nucleosyl)-tetraphosphatase PrpE [asymmetrical] (245 aa).

It belongs to the PrpE family. Ni(2+) is required as a cofactor.

It carries out the reaction P(1),P(4)-bis(5'-guanosyl) tetraphosphate + H2O = GMP + GTP + 2 H(+). Its function is as follows. Asymmetrically hydrolyzes Ap4p to yield AMP and ATP. The polypeptide is Bis(5'-nucleosyl)-tetraphosphatase PrpE [asymmetrical] (Geobacillus thermodenitrificans (strain NG80-2)).